The sequence spans 481 residues: Guanine nucleotide exchange factor C9orf72 homolog (481 aa).

Residues Ser23–Ser194 form the uDENN C9ORF72-type domain. A cDENN C9ORF72-type domain is found at Asp200–Thr343. The dDENN C9ORF72-type domain occupies Val370–Phe464. The segment at Ser461–Phe481 is required for the homodimerization of the C9orf72-SMCR8 complex.

In terms of assembly, component of the C9orf72-SMCR8 complex, at least composed of C9orf72, SMCR8 and WDR41. The complex is formed of two protomers, each individually consisting of one molecule each of C9orf72, SMCR8 and WDR41. The protomers homodimerize via an interaction between C9orf72 (via C-terminus) and SMCR8 (via N-terminus). Within each protomer SMCR8 (via DENN domain) acts as a bridging protein between WDR41 (via C-terminus and N-terminus) and C9orf72 (via C-terminus). The C9orf72-SMCR8 complex associates with the ULK1/ATG1 kinase complex. Interacts with ULK1/ATG1 kinase complex members ULK1, ATG13 and RB1CC1. Interacts with SMCR8; the interaction is direct. Interacts with HNRNPA1, HNRNPA2B1 and UBQLN2. Interacts with small Rab GTPase RAB1A; the interaction mediates recruitment of RAB1A to the ULK1/ATG1 kinase complex. Also interacts with small Rab GTPase RAB7A. Interacts with cofilin. Interacts with GTP-binding proteins ARF1 and ARF6. Interacts with the DLG4/PSD-95. Interacts with CARM1 (via PH domain-like fold). Interacts with RAB39A and RAB39B (in GDP-bound forms); functions as GEF for RAB39A and RAB39B.

Its subcellular location is the nucleus. It is found in the cytoplasm. It localises to the P-body. The protein localises to the stress granule. The protein resides in the endosome. Its subcellular location is the lysosome. It is found in the cytoplasmic vesicle. It localises to the autophagosome. The protein localises to the autolysosome. The protein resides in the secreted. Its subcellular location is the cell projection. It is found in the axon. It localises to the growth cone. The protein localises to the perikaryon. Acts as a guanine-nucleotide releasing factor (GEF) for Rab GTPases by promoting the conversion of inactive RAB-GDP to the active form RAB-GTP. Acts as a GEF for RAB39A which enables HOPS-mediated autophagosome-lysosome membrane tethering and fusion in mammalian autophagy. Component of the C9orf72-SMCR8 complex where both subunits display GEF activity and that regulates autophagy. As part of the C9orf72-SMCR8-WDR41 (CSW) complex, functions as GEF for RAB8A and RAB39B, thereby promoting autophagosome maturation. As part of the C9orf72-SMCR8 complex, also functions as GTPase activating protein (GAP) for RAB8A and RAB11A in vitro. The C9orf72-SMCR8 complex also acts as a regulator of autophagy initiation by interacting with the ULK1/ATG1 kinase complex and modulating its protein kinase activity. Promotes initiation of autophagy by regulating the RAB1A-dependent trafficking of the ULK1/ATG1 kinase complex to the phagophore which leads to autophagosome formation. Acts as a regulator of mTORC1 signaling by promoting phosphorylation of mTORC1 substrates. Plays a role in endosomal trafficking. May be involved in regulating the maturation of phagosomes to lysosomes. Promotes the lysosomal localization and lysosome-mediated degradation of CARM1 which leads to inhibition of starvation-induced lipid metabolism. Regulates actin dynamics in motor neurons by inhibiting the GTP-binding activity of ARF6, leading to ARF6 inactivation. This reduces the activity of the LIMK1 and LIMK2 kinases which are responsible for phosphorylation and inactivation of cofilin, leading to CFL1/cofilin activation. Positively regulates axon extension and axon growth cone size in spinal motor neurons. Required for SMCR8 protein expression and localization at pre- and post-synaptic compartments in the forebrain, also regulates protein abundance of RAB3A and GRIA1/GLUR1 in post-synaptic compartments in the forebrain and hippocampus. Plays a role within the hematopoietic system in restricting inflammation and the development of autoimmunity. The chain is Guanine nucleotide exchange factor C9orf72 homolog from Rattus norvegicus (Rat).